The following is a 499-amino-acid chain: Salviol synthase (499 aa).

The helical transmembrane segment at 4 to 24 (HIPSLVLCISFFIFFKIVSKL) threads the bilayer. C436 contributes to the heme binding site.

It belongs to the cytochrome P450 family. It depends on heme as a cofactor. As to expression, expressed in leaf glandular trichomes.

It is found in the membrane. It carries out the reaction ferruginol + reduced [NADPH--hemoprotein reductase] + O2 = salviol + oxidized [NADPH--hemoprotein reductase] + H2O + H(+). It participates in secondary metabolite biosynthesis; terpenoid biosynthesis. Monooxygenase involved in the biosynthesis of labdane-related diterpenes natural products. Catalyzes the oxidation of ferruginol to produce salviol. Salviol is an intermediate in the biosynthesis of carnosate, a potent antioxidant. This is Salviol synthase from Salvia pomifera (Apple sage).